A 742-amino-acid chain; its full sequence is Ferric enterobactin receptor PirA (742 aa).

The signal sequence occupies residues Met-1–Ala-28. The 128-residue stretch at Gln-57–Lys-184 folds into the TBDR plug domain. Disordered regions lie at residues Gly-91–Arg-112 and Ser-409–Lys-435. Residues Leu-94–Gln-108 are compositionally biased toward polar residues. The TBDR beta-barrel domain maps to Arg-189 to Phe-742. Cys-516 and Cys-525 are disulfide-bonded. The TonB C-terminal box signature appears at Ala-725 to Phe-742.

Belongs to the TonB-dependent receptor family.

It is found in the cell outer membrane. In terms of biological role, specific receptor for the siderophore ferric enterobactin. Probably involved in the transport of siderophores, including host catecholamines such as L-DOPA. The protein is Ferric enterobactin receptor PirA of Pseudomonas aeruginosa (strain ATCC 15692 / DSM 22644 / CIP 104116 / JCM 14847 / LMG 12228 / 1C / PRS 101 / PAO1).